A 131-amino-acid chain; its full sequence is Phosphomevalonate dehydratase small subunit (131 aa).

Serine 62 (proton acceptor) is an active-site residue.

Belongs to the AcnX type II small subunit family. Heterodimer composed of a large subunit (PMDh-L) and a small subunit (PMDh-S).

It catalyses the reaction (R)-5-phosphomevalonate = (2E)-3-methyl-5-phosphooxypent-2-enoate + H2O. The protein operates within isoprenoid biosynthesis; isopentenyl diphosphate biosynthesis via mevalonate pathway. Component of a hydro-lyase that catalyzes the dehydration of mevalonate 5-phosphate (MVA5P) to form trans-anhydromevalonate 5-phosphate (tAHMP). Involved in the archaeal mevalonate (MVA) pathway, which provides fundamental precursors for isoprenoid biosynthesis, such as isopentenyl diphosphate (IPP) and dimethylallyl diphosphate (DMAPP). This Thermococcus gammatolerans (strain DSM 15229 / JCM 11827 / EJ3) protein is Phosphomevalonate dehydratase small subunit.